The following is a 77-amino-acid chain: U11-lycotoxin-Ls1a (77 aa).

The first 20 residues, 1–20, serve as a signal peptide directing secretion; sequence MKLIILTGLVLFAIVSFIEA. Positions 21–26 are excised as a propeptide; it reads EEETGR.

Belongs to the neurotoxin 19 (CSTX) family. 10 (U11-Lctx) subfamily. Post-translationally, contains 4 disulfide bonds. As to expression, expressed by the venom gland.

It localises to the secreted. The sequence is that of U11-lycotoxin-Ls1a from Lycosa singoriensis (Wolf spider).